Here is a 507-residue protein sequence, read N- to C-terminus: MSCRSYRISSGCGVTRNFSSCSAVAPKTGNRCCISAAPYRGVSCYRGLTGFGSRSLCNLGSCGPRIAVGGFRAGSCGRSFGYRSGGVCGPSPPCITTVSVNESLLTPLNLEIDPNAQCVKQEEKEQIKSLNSRFAAFIDKVRFLEQQNKLLETKWQFYQNQRCCESNLEPLFSGYIETLRREAECVEADSGRLASELNHVQEVLEGYKKKYEEEVALRATAENEFVVLKKDVDCAYLRKSDLEANVEALVEESSFLRRLYEEEIRVLQAHISDTSVIVKMDNSRDLNMDCIIAEIKAQYDDVASRSRAEAESWYRSKCEEMKATVIRHGETLRRTKEEINELNRMIQRLTAEIENAKCQRAKLEAAVAEAEQQGEAALSDARCKLAELEGALQKAKQDMACLLKEYQEVMNSKLGLDIEIATYRRLLEGEEHRLCEGVGSVNVCVSSSRGGVSCGGLSYSTTPGRQITSGPSAIGGSITVVAPDSCAPCQPRSSSFSCGSSRSVRFA.

The segment at 1–123 is head; sequence MSCRSYRISS…PNAQCVKQEE (123 aa). The IF rod domain occupies 123-434; it reads EKEQIKSLNS…RLLEGEEHRL (312 aa). Residues 124–158 form a coil 1A region; that stretch reads KEQIKSLNSRFAAFIDKVRFLEQQNKLLETKWQFY. The segment at 159–168 is linker 1; the sequence is QNQRCCESNL. Residues 169-269 form a coil 1B region; that stretch reads EPLFSGYIET…YEEEIRVLQA (101 aa). Residue lysine 229 forms a Glycyl lysine isopeptide (Lys-Gly) (interchain with G-Cter in SUMO1) linkage. The interval 270–286 is linker 12; sequence HISDTSVIVKMDNSRDL. The tract at residues 287–430 is coil 2; sequence NMDCIIAEIK…ATYRRLLEGE (144 aa). Residues 431 to 507 form a tail region; the sequence is EHRLCEGVGS…CGSSRSVRFA (77 aa).

Belongs to the intermediate filament family. In terms of assembly, heterotetramer of two type I and two type II keratins. As to expression, synthesis occurs immediately above a small population of matrix cells at the base of the hair bulb and the trichocytes lining the dermal papilla and extends upward through the matrix and ends in the lower part of the cortex of the hair shaft.

This Homo sapiens (Human) protein is Keratin, type II cuticular Hb5 (KRT85).